We begin with the raw amino-acid sequence, 209 residues long: Ribonuclease HII (209 aa).

One can recognise an RNase H type-2 domain in the interval Arg-25–Leu-209. A divalent metal cation contacts are provided by Asp-31, Glu-32, and Asp-123.

Belongs to the RNase HII family. Requires Mn(2+) as cofactor. Mg(2+) serves as cofactor.

It is found in the cytoplasm. The catalysed reaction is Endonucleolytic cleavage to 5'-phosphomonoester.. Functionally, endonuclease that specifically degrades the RNA of RNA-DNA hybrids. In Syntrophotalea carbinolica (strain DSM 2380 / NBRC 103641 / GraBd1) (Pelobacter carbinolicus), this protein is Ribonuclease HII.